Consider the following 311-residue polypeptide: Thioredoxin reductase (311 aa).

Residues 15 to 18 (SGPA), 37 to 44 (EGTQFGGA), asparagine 53, and valine 86 each bind FAD. Cysteine 137 and cysteine 140 are disulfide-bonded. 5 residues coordinate NADP(+): serine 158, histidine 177, arginine 183, isoleucine 240, and tyrosine 260. FAD-binding positions include aspartate 280 and 287 to 290 (RQAI). NADP(+) is bound at residue arginine 287.

The protein belongs to the class-II pyridine nucleotide-disulfide oxidoreductase family. In terms of assembly, homodimer. Requires FAD as cofactor.

Its subcellular location is the cytoplasm. The enzyme catalyses [thioredoxin]-dithiol + NADP(+) = [thioredoxin]-disulfide + NADPH + H(+). This Mycolicibacterium smegmatis (Mycobacterium smegmatis) protein is Thioredoxin reductase.